The following is a 301-amino-acid chain: Glycine--tRNA ligase alpha subunit (301 aa).

The protein belongs to the class-II aminoacyl-tRNA synthetase family. As to quaternary structure, tetramer of two alpha and two beta subunits.

The protein resides in the cytoplasm. It catalyses the reaction tRNA(Gly) + glycine + ATP = glycyl-tRNA(Gly) + AMP + diphosphate. The sequence is that of Glycine--tRNA ligase alpha subunit from Variovorax paradoxus (strain S110).